A 423-amino-acid chain; its full sequence is Putative transmembrane protein ORF103 (423 aa).

Basic and acidic residues predominate over residues Glu43–Val57. The interval Glu43 to Arg91 is disordered. The segment covering Lys67–Glu84 has biased composition (acidic residues). Transmembrane regions (helical) follow at residues Ile125–Leu145 and Phe162–Ile182. Residues Asp253–Lys282 are disordered. 2 helical membrane-spanning segments follow: residues Leu326–Ser346 and Ile366–Leu386.

Its subcellular location is the host membrane. This chain is Putative transmembrane protein ORF103, found in Magallana gigas (Pacific oyster).